We begin with the raw amino-acid sequence, 419 residues long: Dual specificity protein phosphatase 7 (419 aa).

The segment at 1-47 (MKNQLRGPPARAHMSTSGAAAAGGTRAGSEPGAGSGSGAGTGAGAAT) is disordered. The span at 10–29 (ARAHMSTSGAAAAGGTRAGS) shows a compositional bias: low complexity. Gly residues predominate over residues 31–47 (PGAGSGSGAGTGAGAAT). Positions 68–187 (GGASLLLLDC…FQTEYSEHCE (120 aa)) constitute a Rhodanese domain. Residues 216–240 (CSDGESDRELPSSATESDGSPVPSS) are disordered. A compositionally biased stretch (polar residues) spans 227 to 240 (SSATESDGSPVPSS). In terms of domain architecture, Tyrosine-protein phosphatase spans 244-387 (FPVQILPYLY…LLDFERTLGL (144 aa)). Cys331 serves as the catalytic Phosphocysteine intermediate. 331–337 (CLAGISR) provides a ligand contact to substrate.

This sequence belongs to the protein-tyrosine phosphatase family. Non-receptor class dual specificity subfamily. As to quaternary structure, interacts with MAPK1/ERK2; the interaction enhances DUSP7 phosphatase activity. As to expression, strongly expressed in liver. Expressed at significantly higher levels in malignant hematopoietic cells than in corresponding non-malignant cells.

The protein localises to the cytoplasm. It catalyses the reaction O-phospho-L-tyrosyl-[protein] + H2O = L-tyrosyl-[protein] + phosphate. It carries out the reaction O-phospho-L-seryl-[protein] + H2O = L-seryl-[protein] + phosphate. The enzyme catalyses O-phospho-L-threonyl-[protein] + H2O = L-threonyl-[protein] + phosphate. With respect to regulation, strongly inhibited by sodium orthovanadate. Functionally, dual specificity protein phosphatase. Shows high activity towards MAPK1/ERK2. Also has lower activity towards MAPK14 and MAPK8. In arrested oocytes, plays a role in meiotic resumption. Promotes nuclear envelope breakdown and activation of the CDK1/Cyclin-B complex in oocytes, probably by dephosphorylating and inactivating the conventional protein kinase C (cPKC) isozyme PRKCB. May also inactivate PRKCA and/or PRKCG. Also important in oocytes for normal chromosome alignment on the metaphase plate and progression to anaphase, where it might regulate activity of the spindle-assembly checkpoint (SAC) complex. The polypeptide is Dual specificity protein phosphatase 7 (Homo sapiens (Human)).